A 1131-amino-acid polypeptide reads, in one-letter code: cGMP-specific 3',5'-cyclic phosphodiesterase (1131 aa).

Disordered stretches follow at residues M1 to T26 and G42 to D150. Low complexity predominate over residues G42–G63. The span at S75–S86 shows a compositional bias: polar residues. The segment covering S110 to Q136 has biased composition (low complexity). 2 GAF domains span residues D255–I412 and N444–I625. A PDEase domain is found at S655–V978. The active-site Proton donor is H731. A divalent metal cation contacts are provided by H735, H771, D772, and D882. Disordered regions lie at residues Q1019 to L1048 and S1078 to L1131. Basic and acidic residues-rich tracts occupy residues G1024–R1035 and S1078–S1088. The segment covering A1097–M1117 has biased composition (low complexity). The segment covering S1121–L1131 has biased composition (basic residues). At C1128 the chain carries Cysteine methyl ester. C1128 carries S-farnesyl cysteine lipidation. Residues A1129–L1131 constitute a propeptide, removed in mature form.

It belongs to the cyclic nucleotide phosphodiesterase family. In terms of assembly, interacts with PrBP. Requires a divalent metal cation as cofactor.

The protein resides in the cell membrane. It carries out the reaction 3',5'-cyclic GMP + H2O = GMP + H(+). In terms of biological role, has a role regulating cGMP transport in Malpighian tubule principal cells. The polypeptide is cGMP-specific 3',5'-cyclic phosphodiesterase (Drosophila erecta (Fruit fly)).